Consider the following 429-residue polypeptide: Adenylosuccinate synthetase (429 aa).

GTP is bound by residues 12 to 18 (GDEGKGK) and 40 to 42 (GHT). The Proton acceptor role is filled by D13. The Mg(2+) site is built by D13 and G40. IMP-binding positions include 13-16 (DEGK), 38-41 (NAGH), T128, R142, Q223, T238, and R302. The active-site Proton donor is H41. Position 298 to 304 (298 to 304 (VNTGRKR)) interacts with substrate. GTP is bound by residues R304, 330-332 (KLD), and 412-414 (GVG).

It belongs to the adenylosuccinate synthetase family. In terms of assembly, homodimer. Mg(2+) is required as a cofactor.

The protein resides in the cytoplasm. It carries out the reaction IMP + L-aspartate + GTP = N(6)-(1,2-dicarboxyethyl)-AMP + GDP + phosphate + 2 H(+). Its pathway is purine metabolism; AMP biosynthesis via de novo pathway; AMP from IMP: step 1/2. Plays an important role in the de novo pathway of purine nucleotide biosynthesis. Catalyzes the first committed step in the biosynthesis of AMP from IMP. The polypeptide is Adenylosuccinate synthetase (Corynebacterium glutamicum (strain R)).